Consider the following 440-residue polypeptide: 6-phospho-alpha-glucosidase (440 aa).

4–70 (FSVVIAGGGS…PEIEFSYTTD (67 aa)) serves as a coordination point for NAD(+). Arg-93 and Asn-147 together coordinate substrate. A Mn(2+)-binding site is contributed by Cys-169. Asp-170 functions as the Proton donor in the catalytic mechanism. His-200 is a binding site for Mn(2+). Tyr-263 (proton acceptor) is an active-site residue. Arg-283 provides a ligand contact to substrate.

As to quaternary structure, homodimer. Requires NAD(+) as cofactor. It depends on Mn(2+) as a cofactor. Co(2+) serves as cofactor. Ni(2+) is required as a cofactor.

It catalyses the reaction alpha-maltose 6'-phosphate + H2O = D-glucose 6-phosphate + D-glucose. It participates in glycan biosynthesis; sucrose metabolism. In terms of biological role, is involved in the catabolism of alpha-glycosides accumulated via a phosphoenolpyruvate-dependent phosphotransferase system (PEP-PTS). Hydrolyzes a wide variety of 6-phospho-alpha-D-glucosides including maltose-6'-phosphate, isomaltose-6'-phosphate, maltitol-6-phosphate, trehalose-6-phosphate and the 6'-phosphorylated derivatives of the five linkage-isomeric alpha-D-glucosyl-D-fructoses: trehalulose-6'-phosphate, turanose-6'-phosphate, maltulose-6'-phosphate, leucrose-6'-phosphate, and palatinose-6'-phosphate. However, sucrose-6-phosphate is not a substrate for this enzyme. This chain is 6-phospho-alpha-glucosidase, found in Klebsiella pneumoniae.